A 141-amino-acid polypeptide reads, in one-letter code: 6,7-dimethyl-8-ribityllumazine synthase (141 aa).

Residues F11, 42 to 44 (ALE), and 66 to 68 (VVI) each bind 5-amino-6-(D-ribitylamino)uracil. Position 71 to 72 (71 to 72 (ET)) interacts with (2S)-2-hydroxy-3-oxobutyl phosphate. H74 acts as the Proton donor in catalysis. N98 contributes to the 5-amino-6-(D-ribitylamino)uracil binding site. R112 contacts (2S)-2-hydroxy-3-oxobutyl phosphate.

It belongs to the DMRL synthase family.

It carries out the reaction (2S)-2-hydroxy-3-oxobutyl phosphate + 5-amino-6-(D-ribitylamino)uracil = 6,7-dimethyl-8-(1-D-ribityl)lumazine + phosphate + 2 H2O + H(+). The protein operates within cofactor biosynthesis; riboflavin biosynthesis; riboflavin from 2-hydroxy-3-oxobutyl phosphate and 5-amino-6-(D-ribitylamino)uracil: step 1/2. Its function is as follows. Catalyzes the formation of 6,7-dimethyl-8-ribityllumazine by condensation of 5-amino-6-(D-ribitylamino)uracil with 3,4-dihydroxy-2-butanone 4-phosphate. This is the penultimate step in the biosynthesis of riboflavin. In Sphingopyxis alaskensis (strain DSM 13593 / LMG 18877 / RB2256) (Sphingomonas alaskensis), this protein is 6,7-dimethyl-8-ribityllumazine synthase.